A 151-amino-acid chain; its full sequence is Ribosomal RNA large subunit methyltransferase H (151 aa).

Residues Gly-100 and 119 to 124 (LSKMTF) contribute to the S-adenosyl-L-methionine site.

Belongs to the RNA methyltransferase RlmH family. Homodimer.

Its subcellular location is the cytoplasm. The enzyme catalyses pseudouridine(1915) in 23S rRNA + S-adenosyl-L-methionine = N(3)-methylpseudouridine(1915) in 23S rRNA + S-adenosyl-L-homocysteine + H(+). Functionally, specifically methylates the pseudouridine at position 1915 (m3Psi1915) in 23S rRNA. This Thermotoga sp. (strain RQ2) protein is Ribosomal RNA large subunit methyltransferase H.